Consider the following 169-residue polypeptide: MASPDVEYRCFVGGLAWATDERSLETAFSQFGELVDSKIINDRETGRSRGFGFVTFKDEKSMKDAIEGMNGQDLDGRSITVNEAQSRGSGAGGGGRGGGGGYRGGGGYGGGGGGYGGGRREGGGYSGGGGGYSSRGGGGGGYGGGGRRDGGGYGGGEGGGYGGGGGGGW.

Residues 8–86 enclose the RRM domain; sequence YRCFVGGLAW…RSITVNEAQS (79 aa). 2 disordered regions span residues 69-100 and 125-169; these read MNGQ…GGGG and YSGG…GGGW. The segment covering 89 to 100 has biased composition (gly residues); that stretch reads SGAGGGGRGGGG.

As to expression, predominantly expressed in meristematic and growing tissue.

The protein resides in the nucleus. Its function is as follows. May play a general role in circadian phenomena associated with meristematic tissue. This Sinapis alba (White mustard) protein is Glycine-rich RNA-binding protein GRP2A.